A 539-amino-acid chain; its full sequence is MSTNKFVVRITNALFKSSLASNSPPVYPKRIRHFEILPNEKWVIWGPGKGKFLDVLNNKYICEPPLSLRFGFLKESSNILPRIEQVAFKGVMPTAHLSARYEYFKDDYDQTCKQFIFDKASGSNAVSYKVETNNRQINMELYNALVENLNLSSLQDRWVMGLSNGQMRRARLARSILKEPDLLLIDDPFLGLDPAAIATISQFLAKYDSIEVSGGCPIVIGLRYQDTIPAWCTHICCVDEKNGILFEGPIEKLQSKMDETRSRALKELEQLKKASNSKEDISINDLICIHPMYGKKEHEIIKMPHLIELDGLSVSYKGEAVLENLHWKVQPGSKWHIRGDNGSGKSTLLSLLTAEHPQSWNSRVIDNGVPRRTGKTNYFDLNSKIGMSSPELHAIFLKNAGGRLNIRESVATGYHEASSNNYLPIWKRLDKNSQEIVNMYLKYFGLDKDADSVLFEQLSVSDQKLVLFVRSLIKMPQILILDEAFSGMEVEPMMRCHEFLEEWPGTVLVVAHVAEETPKCAHYLRLISPGEYEIGDMEN.

2 consecutive ABC transporter domains span residues 8 to 265 and 307 to 537; these read VRIT…SRAL and IELD…IGDM. Position 339–346 (339–346) interacts with ATP; the sequence is GDNGSGKS.

The protein belongs to the ABC transporter superfamily.

It is found in the mitochondrion. This is an uncharacterized protein from Saccharomyces cerevisiae (strain ATCC 204508 / S288c) (Baker's yeast).